The primary structure comprises 121 residues: Protein TCL1B5 (121 aa).

It belongs to the TCL1 family.

The sequence is that of Protein TCL1B5 (Tcl1b5) from Mus musculus (Mouse).